Reading from the N-terminus, the 268-residue chain is uncharacterized protein (268 aa).

Transmembrane regions (helical) follow at residues 169–189, 190–210, and 225–245; these read AIIY…QGFA, GVKT…LWLL, and IFAG…LSVF.

It localises to the cell membrane. This is an uncharacterized protein from Bacillus subtilis (strain 168).